Reading from the N-terminus, the 265-residue chain is Homeobox protein Nkx-6.3 (265 aa).

Residues 139-198 (KKHTRPTFTGHQIFALEKTFEQTKYLAGPERARLAYSLGMTESQVKVWFQNRRTKWRKKS) constitute a DNA-binding region (homeobox). Residues 196 to 240 (KKSALEPSSSTPRAPGGAGAGAGGDRAPSENEDDEYNKPLDPDSD) are disordered.

It is found in the nucleus. Putative transcription factor, which may be involved in patterning of central nervous system and pancreas. The protein is Homeobox protein Nkx-6.3 (NKX6-3) of Homo sapiens (Human).